A 202-amino-acid polypeptide reads, in one-letter code: Transmembrane 4 L6 family member 1 (202 aa).

Topologically, residues 1–9 (MCYGKCARC) are cytoplasmic. Residues 10 to 30 (IGHSLVGLALLCIAANILLYF) form a helical membrane-spanning segment. Topologically, residues 31-49 (PNGETKYASENHLSRFVWF) are extracellular. The helical transmembrane segment at 50–70 (FSGIVGGGLLMLLPAFVFIGL) threads the bilayer. At 71–93 (EQDDCCGCCGHENCGKRCAMLSS) the chain is on the cytoplasmic side. Residues 94 to 114 (VLAALIGIAGSGYCVIVAALG) traverse the membrane as a helical segment. The Extracellular portion of the chain corresponds to 115–161 (LAEGPLCLDSLGQWNYTFASTEGQYLLDTSTWSECTEPKHIVEWNVS). Residues Asn-129 and Asn-159 are each glycosylated (N-linked (GlcNAc...) asparagine). A helical membrane pass occupies residues 162–182 (LFSILLALGGIEFILCLIQVI). Residues 183-202 (NGVLGGICGFCCSHQQQYDC) lie on the Cytoplasmic side of the membrane.

Belongs to the L6 tetraspanin family. As to quaternary structure, present in high molecular weight complexes in tumor cells. Interacts with SDCBP2. Highly expressed in lung, breast, colon and ovarian carcinomas. It is also present on some normal cells, endothelial cells in particular.

The protein localises to the membrane. The chain is Transmembrane 4 L6 family member 1 (TM4SF1) from Homo sapiens (Human).